Here is a 215-residue protein sequence, read N- to C-terminus: Glutathione S-transferase-like protein (215 aa).

The GST N-terminal domain maps to 1 to 76; it reads MPNARILKIQ…YVAASGPAAP (76 aa). A GST C-terminal domain is found at 82-215; that stretch reads NVAEQAAVRQ…LVAVRKEASV (134 aa).

This sequence belongs to the GST superfamily.

In Aspergillus aculeatus (strain ATCC 16872 / CBS 172.66 / WB 5094), this protein is Glutathione S-transferase-like protein.